A 142-amino-acid polypeptide reads, in one-letter code: Nucleoside diphosphate kinase (142 aa).

Lys10, Phe58, Arg86, Thr92, Arg103, and Asn113 together coordinate ATP. The Pros-phosphohistidine intermediate role is filled by His116.

The protein belongs to the NDK family. As to quaternary structure, homotetramer. The cofactor is Mg(2+).

It localises to the cytoplasm. The catalysed reaction is a 2'-deoxyribonucleoside 5'-diphosphate + ATP = a 2'-deoxyribonucleoside 5'-triphosphate + ADP. The enzyme catalyses a ribonucleoside 5'-diphosphate + ATP = a ribonucleoside 5'-triphosphate + ADP. Major role in the synthesis of nucleoside triphosphates other than ATP. The ATP gamma phosphate is transferred to the NDP beta phosphate via a ping-pong mechanism, using a phosphorylated active-site intermediate. The chain is Nucleoside diphosphate kinase from Ehrlichia chaffeensis (strain ATCC CRL-10679 / Arkansas).